A 479-amino-acid chain; its full sequence is Aspartyl/glutamyl-tRNA(Asn/Gln) amidotransferase subunit B (479 aa).

It belongs to the GatB/GatE family. GatB subfamily. As to quaternary structure, heterotrimer of A, B and C subunits.

It carries out the reaction L-glutamyl-tRNA(Gln) + L-glutamine + ATP + H2O = L-glutaminyl-tRNA(Gln) + L-glutamate + ADP + phosphate + H(+). The catalysed reaction is L-aspartyl-tRNA(Asn) + L-glutamine + ATP + H2O = L-asparaginyl-tRNA(Asn) + L-glutamate + ADP + phosphate + 2 H(+). Its function is as follows. Allows the formation of correctly charged Asn-tRNA(Asn) or Gln-tRNA(Gln) through the transamidation of misacylated Asp-tRNA(Asn) or Glu-tRNA(Gln) in organisms which lack either or both of asparaginyl-tRNA or glutaminyl-tRNA synthetases. The reaction takes place in the presence of glutamine and ATP through an activated phospho-Asp-tRNA(Asn) or phospho-Glu-tRNA(Gln). The polypeptide is Aspartyl/glutamyl-tRNA(Asn/Gln) amidotransferase subunit B (Streptococcus pyogenes serotype M49 (strain NZ131)).